A 747-amino-acid chain; its full sequence is AMP deaminase 1 (747 aa).

Residue Thr-81 is modified to Phosphothreonine. The residue at position 85 (Ser-85) is a Phosphoserine. Residue Tyr-216 is modified to Phosphotyrosine. The Zn(2+) site is built by His-303 and His-305. Substrate contacts are provided by residues His-305 and 374-379 (KFNDKY). Ser-441 is modified (phosphoserine). His-572 serves as a coordination point for Zn(2+). Residue Glu-575 participates in substrate binding. The active-site Proton acceptor is His-594. Residue Asp-649 participates in Zn(2+) binding. Residue 650–653 (DPMQ) participates in substrate binding.

It belongs to the metallo-dependent hydrolases superfamily. Adenosine and AMP deaminases family. As to quaternary structure, homotetramer. The cofactor is Zn(2+).

It catalyses the reaction AMP + H2O + H(+) = IMP + NH4(+). It functions in the pathway purine metabolism; IMP biosynthesis via salvage pathway; IMP from AMP: step 1/1. Its function is as follows. AMP deaminase plays a critical role in energy metabolism. This Rattus norvegicus (Rat) protein is AMP deaminase 1.